We begin with the raw amino-acid sequence, 258 residues long: MVLIRVLANLLILQLSYAQKSSELVFGGRPCNINEHRSLVVLFNSSGFLCGGTLINQDWVVTAAHCDSNNFQLLFGVHSKKTLNEDEQTRDPKEKFFCPNRKKDDEVDKDIMLIKLDSSVNNSEHIAPLSLPSSPPSVGSVCRIMGWGKTIPTKDIYPDVPHCANINILDHAVCRTAYSWRQVANTTLCAGILQGGKDTCHFDSGGPLICNEQFHGIVSWGGHPCGQPREPGVYTNVFDYTDWIQSIIAGNKDATCPP.

An N-terminal signal peptide occupies residues 1-18 (MVLIRVLANLLILQLSYA). The propeptide occupies 19-24 (QKSSEL). One can recognise a Peptidase S1 domain in the interval 25-249 (VFGGRPCNIN…YTDWIQSIIA (225 aa)). Cystine bridges form between cysteine 31/cysteine 163, cysteine 50/cysteine 66, cysteine 98/cysteine 256, cysteine 142/cysteine 210, cysteine 174/cysteine 189, and cysteine 200/cysteine 225. Asparagine 44 carries an N-linked (GlcNAc...) asparagine glycan. Residues histidine 65 and aspartate 110 each act as charge relay system in the active site. Residues asparagine 121 and asparagine 185 are each glycosylated (N-linked (GlcNAc...) asparagine). The Charge relay system role is filled by serine 204.

Belongs to the peptidase S1 family. Snake venom subfamily. Monomer. As to expression, expressed by the venom gland.

It localises to the secreted. Its function is as follows. Snake venom serine protease that activates plasminogen. The sequence is that of Venom plasminogen activator GPV-PA from Trimeresurus albolabris (White-lipped pit viper).